The following is a 175-amino-acid chain: Short chain dehydrogenase/reductase dpmpG (175 aa).

NADP(+) contacts are provided by Ile18, Asp71, Asn98, and Lys132.

Belongs to the short-chain dehydrogenases/reductases (SDR) family.

Its pathway is secondary metabolite biosynthesis; terpenoid biosynthesis. Short chain dehydrogenase/reductase; part of the gene cluster that mediates the biosynthesis of diterpenoid pyrones. The first step of the pathway is the synthesis of the alpha-pyrone moiety by the polyketide synthase dpmpA via condensation of one acetyl-CoA starter unit with 3 malonyl-CoA units and 2 methylations. The alpha-pyrone is then combined with geranylgeranyl pyrophosphate (GGPP) formed by the GGPP synthase dpmpD through the action of the prenyltransferase dpmpC to yield a linear alpha-pyrone diterpenoid. Subsequent steps in the diterpenoid pyrone biosynthetic pathway involve the decalin core formation, which is initiated by the epoxidation of the C10-C11 olefin by the FAD-dependent oxidoreductase dpmpE, and is followed by a cyclization cascade catalyzed by the terpene cyclase dpmpB. The short chain dehydrogenase/reductase dpmpG then oxidizes the 8S hydroxy group to a ketone and the short chain dehydrogenase/reductase dpmpH reduces the ketone to the 8R hydroxy group to yield higginsianin B. Higginsianin B is further methylated by the methyltransferase dpmpI to produce the intermediate named FDDP B. The cytochrome P450 monooxygenase dpmpJ then oxidizes the C-26 methyl to primary alcohol, producing the final diterpenoid pyrone with a C-26 primary alcohol on the gamma-pyrone moiety named FDDP C. This is Short chain dehydrogenase/reductase dpmpG from Macrophomina phaseolina (strain MS6) (Charcoal rot fungus).